A 344-amino-acid polypeptide reads, in one-letter code: Heat-inducible transcription repressor HrcA (344 aa).

This sequence belongs to the HrcA family.

Its function is as follows. Negative regulator of class I heat shock genes (grpE-dnaK-dnaJ and groELS operons). Prevents heat-shock induction of these operons. This Streptococcus pneumoniae (strain Taiwan19F-14) protein is Heat-inducible transcription repressor HrcA.